A 461-amino-acid chain; its full sequence is Glyceraldehyde-3-phosphate dehydrogenase-like protein (461 aa).

Threonine 421 bears the Phosphothreonine mark.

The protein belongs to the glyceraldehyde-3-phosphate dehydrogenase family.

This is Glyceraldehyde-3-phosphate dehydrogenase-like protein (gap2) from Pseudomonas aeruginosa (strain UCBPP-PA14).